We begin with the raw amino-acid sequence, 139 residues long: Ribulose bisphosphate carboxylase small subunit (139 aa).

The protein belongs to the RuBisCO small chain family. Heterohexadecamer of 8 large and 8 small subunits.

It localises to the plastid. The protein resides in the chloroplast. In terms of biological role, ruBisCO catalyzes two reactions: the carboxylation of D-ribulose 1,5-bisphosphate, the primary event in carbon dioxide fixation, as well as the oxidative fragmentation of the pentose substrate in the photorespiration process. Both reactions occur simultaneously and in competition at the same active site. Although the small subunit is not catalytic it is essential for maximal activity. In Detonula confervacea (Marine diatom), this protein is Ribulose bisphosphate carboxylase small subunit.